Here is a 299-residue protein sequence, read N- to C-terminus: NEDD8-activating enzyme E1 catalytic subunit (299 aa).

Position 12-37 (12-37) interacts with ATP; sequence GLGCEILKNLTMLSFVKQVHIVDIDT. The active-site Glycyl thioester intermediate is the Cys168.

It belongs to the ubiquitin-activating E1 family. UBA3 subfamily. As to quaternary structure, heterodimer of UBA3 and ULA1. Interacts with NEDD8 and UBC12.

It carries out the reaction ATP + [NEDD8 protein] + [E1 NEDD8-activating enzyme]-L-cysteine = AMP + diphosphate + [E1 NEDD8-activating enzyme]-S-[NEDD8 protein]-yl-L-cysteine.. It functions in the pathway protein modification; protein neddylation. In terms of biological role, catalytic subunit of the dimeric UBA3-ULA1 E1 enzyme. E1 activates NEDD8/RUB1 by first adenylating its C-terminal glycine residue with ATP, thereafter linking this residue to the side chain of the catalytic cysteine, yielding a NEDD8-UBA3 thioester and free AMP. E1 finally transfers NEDD8 to the catalytic cysteine of UBC12. The chain is NEDD8-activating enzyme E1 catalytic subunit (UBA3) from Saccharomyces cerevisiae (strain ATCC 204508 / S288c) (Baker's yeast).